Here is a 590-residue protein sequence, read N- to C-terminus: Cytosolic Fe-S cluster assembly factor nar1 (590 aa).

Cys-20 contributes to the [4Fe-4S] cluster binding site. The tract at residues 25–50 (ESLPQKQSNENPYEVTTEDKVQPENP) is disordered. [4Fe-4S] cluster is bound by residues Cys-60, Cys-63, Cys-66, Cys-204, and Cys-259. Residues 423-446 (PGAKVATGQTAGGRRQPISRNGAS) form a disordered region. [4Fe-4S] cluster is bound by residues Cys-461 and Cys-465.

This sequence belongs to the NARF family.

Functionally, component of the cytosolic Fe/S protein assembly machinery. Required for maturation of extramitochondrial Fe/S proteins. May play a role in the transfer of pre-assembled Fe/S clusters to target apoproteins. This chain is Cytosolic Fe-S cluster assembly factor nar1 (nar1), found in Emericella nidulans (strain FGSC A4 / ATCC 38163 / CBS 112.46 / NRRL 194 / M139) (Aspergillus nidulans).